Consider the following 148-residue polypeptide: 3-hydroxyacyl-[acyl-carrier-protein] dehydratase FabZ (148 aa).

His48 is an active-site residue.

The protein belongs to the thioester dehydratase family. FabZ subfamily.

It is found in the cytoplasm. It carries out the reaction a (3R)-hydroxyacyl-[ACP] = a (2E)-enoyl-[ACP] + H2O. Functionally, involved in unsaturated fatty acids biosynthesis. Catalyzes the dehydration of short chain beta-hydroxyacyl-ACPs and long chain saturated and unsaturated beta-hydroxyacyl-ACPs. In Nitratiruptor sp. (strain SB155-2), this protein is 3-hydroxyacyl-[acyl-carrier-protein] dehydratase FabZ.